Reading from the N-terminus, the 529-residue chain is Snake venom 5'-nucleotidase (529 aa).

A signal peptide is located at residue glycine 1. 2 residues coordinate Zn(2+): aspartate 12 and histidine 14. A disulfide bridge connects residues cysteine 27 and cysteine 32. The Zn(2+) site is built by aspartate 60, asparagine 92, histidine 195, and histidine 218. Asparagine 308 and asparagine 322 each carry an N-linked (GlcNAc...) asparagine glycan. 2 disulfide bridges follow: cysteine 328/cysteine 333 and cysteine 340/cysteine 362. Arginine 329 lines the AMP pocket. AMP-binding residues include asparagine 365, arginine 370, and phenylalanine 393. Cysteine 452 and cysteine 455 are joined by a disulfide. Phenylalanine 476 and aspartate 482 together coordinate AMP. A lipid anchor (GPI-anchor amidated serine) is attached at serine 525. The propeptide at 526–529 (AGSL) is removed in mature form.

The protein belongs to the 5'-nucleotidase family. The cofactor is Zn(2+). Venom 5'-nucleotidases (or a part thereof) may be released into the venom via exosome-like vesicles. They may be attached via a GPI anchor to the membrane of these vesicles. Soluble forms of 5'-nucleotidase might be released by cleavage of the ectodomain in the exosome-like vesicles or venom gland cells. In terms of tissue distribution, expressed by the venom gland.

It is found in the membrane. It catalyses the reaction a ribonucleoside 5'-phosphate + H2O = a ribonucleoside + phosphate. Functionally, hydrolyzes nucleotides into nucleosides. Snake venom 5'-nucleotidases are widely distributed among venomous snake taxa, but there is a lack of information about their biological activities. They have been shown to inhibit platelet aggregation. This effect may be due to the liberation of inhibitory AMP or adenosine by its action on ADP released upon initiation of aggregation. Venom 5'-nucleotidases are also known to synergistically act in vivo with other toxins like ADPases, phospholipases, and disintegrins to exert a more pronounced anti-coagulant effect. The protein is Snake venom 5'-nucleotidase of Naja atra (Chinese cobra).